We begin with the raw amino-acid sequence, 205 residues long: Tic20 family protein Ycf60 (205 aa).

5 helical membrane-spanning segments follow: residues 5 to 25 (LFVN…VILI), 54 to 74 (AISC…FGIV), 102 to 122 (LIGF…IIQI), 130 to 150 (IVQA…LTSL), and 163 to 183 (LADT…TDAL).

Belongs to the Tic20 family.

It is found in the plastid. Its subcellular location is the chloroplast membrane. This Cyanidium caldarium (Red alga) protein is Tic20 family protein Ycf60 (ycf60).